The primary structure comprises 154 residues: Myoglobin (154 aa).

The Globin domain maps to 2-148 (GLSDGEWQLV…FRKDIAAKYK (147 aa)). Serine 4 bears the Phosphoserine mark. Histidine 65 is a nitrite binding site. Histidine 65 serves as a coordination point for O2. Threonine 68 bears the Phosphothreonine mark. Histidine 94 serves as a coordination point for heme b.

It belongs to the globin family. Monomeric.

Its subcellular location is the cytoplasm. The protein resides in the sarcoplasm. It catalyses the reaction Fe(III)-heme b-[protein] + nitric oxide + H2O = Fe(II)-heme b-[protein] + nitrite + 2 H(+). It carries out the reaction H2O2 + AH2 = A + 2 H2O. Functionally, monomeric heme protein which primary function is to store oxygen and facilitate its diffusion within muscle tissues. Reversibly binds oxygen through a pentacoordinated heme iron and enables its timely and efficient release as needed during periods of heightened demand. Depending on the oxidative conditions of tissues and cells, and in addition to its ability to bind oxygen, it also has a nitrite reductase activity whereby it regulates the production of bioactive nitric oxide. Under stress conditions, like hypoxia and anoxia, it also protects cells against reactive oxygen species thanks to its pseudoperoxidase activity. The sequence is that of Myoglobin (MB) from Delphinus delphis (Short-beaked common dolphin).